We begin with the raw amino-acid sequence, 160 residues long: Ribonuclease P protein component 2 (160 aa).

This sequence belongs to the eukaryotic/archaeal RNase P protein component 2 family. In terms of assembly, consists of a catalytic RNA component and at least 4-5 protein subunits.

The protein localises to the cytoplasm. The catalysed reaction is Endonucleolytic cleavage of RNA, removing 5'-extranucleotides from tRNA precursor.. In terms of biological role, part of ribonuclease P, a protein complex that generates mature tRNA molecules by cleaving their 5'-ends. The chain is Ribonuclease P protein component 2 from Methanosphaerula palustris (strain ATCC BAA-1556 / DSM 19958 / E1-9c).